The chain runs to 221 residues: 2-amino-5-formylamino-6-ribosylaminopyrimidin-4(3H)-one 5'-monophosphate deformylase (221 aa).

Glutamate 29, histidine 31, aspartate 40, and histidine 108 together coordinate Fe cation.

This sequence belongs to the creatininase superfamily. FAPy deformylase family. As to quaternary structure, homodimer. Requires Fe(2+) as cofactor. Zn(2+) serves as cofactor.

It carries out the reaction 2-amino-5-formylamino-6-(5-phospho-D-ribosylamino)pyrimidin-4(3H)-one + H2O = 2,5-diamino-6-(1-D-ribosylamino)pyrimidin-4(3H)-one 5'-phosphate + formate + H(+). It functions in the pathway cofactor biosynthesis; coenzyme F420 biosynthesis. Its pathway is cofactor biosynthesis; riboflavin biosynthesis. Its function is as follows. Catalyzes the hydrolysis of the formamide of 2-amino-5-formylamino-6-ribosylamino-4(3H)-pyrimidinone 5'-monophosphate (FAPy) to form 2,5-diamino-6-ribosylamino-4(3H)-pyrimidinone 5'-phosphate (APy). This chain is 2-amino-5-formylamino-6-ribosylaminopyrimidin-4(3H)-one 5'-monophosphate deformylase, found in Methanococcus maripaludis (strain C5 / ATCC BAA-1333).